Reading from the N-terminus, the 296-residue chain is Cytidine deaminase (296 aa).

CMP/dCMP-type deaminase domains lie at 47–167 (TEAE…FGPK) and 186–296 (DSAD…IDPV). 88–90 (NLE) serves as a coordination point for substrate. Zn(2+) is bound at residue His101. The active-site Proton donor is Glu103. Residues Cys128 and Cys131 each coordinate Zn(2+).

The protein belongs to the cytidine and deoxycytidylate deaminase family. Homodimer. Requires Zn(2+) as cofactor.

The catalysed reaction is cytidine + H2O + H(+) = uridine + NH4(+). The enzyme catalyses 2'-deoxycytidine + H2O + H(+) = 2'-deoxyuridine + NH4(+). This enzyme scavenges exogenous and endogenous cytidine and 2'-deoxycytidine for UMP synthesis. This Shewanella baltica (strain OS155 / ATCC BAA-1091) protein is Cytidine deaminase.